A 91-amino-acid polypeptide reads, in one-letter code: DNA-binding protein HU (91 aa).

It belongs to the bacterial histone-like protein family.

In terms of biological role, histone-like DNA-binding protein which is capable of wrapping DNA to stabilize it, and thus to prevent its denaturation under extreme environmental conditions. Also seems to act as a fortuitous virulence factor in delayed sequelae by binding to heparan sulfate-proteoglycans in the extracellular matrix of target organs and acting as a nidus for in situ immune complex formation. This is DNA-binding protein HU (hup) from Streptococcus gordonii.